A 258-amino-acid polypeptide reads, in one-letter code: Synapse differentiation-inducing gene protein 1 (258 aa).

The Cytoplasmic segment spans residues 1–181 (MAGVVEQKSG…NFLVMPPRDH (181 aa)). Position 137 is a phosphoserine (serine 137). A helical membrane pass occupies residues 182–202 (LGLSVFSMLCCFWPLGIAAFY). Residues 203 to 228 (LSHETNKAVAKGDFHQASTSSRRALF) lie on the Extracellular side of the membrane. An intramembrane region (helical) is located at residues 229–249 (LAVLSITIGTGIYVGVAVALI). Residues 250–258 (AYLSKSNHL) lie on the Extracellular side of the membrane.

It belongs to the CD225/Dispanin family. In terms of assembly, homodimer. Interacts with GRIA1 and GRIA2.

The protein localises to the cell membrane. The protein resides in the early endosome membrane. It localises to the postsynaptic density membrane. Its subcellular location is the synapse. It is found in the cell projection. The protein localises to the dendrite. The protein resides in the dendritic spine. Functionally, may regulate AMPA receptor content at nascent synapses, and have a role in postsynaptic development and maturation. This is Synapse differentiation-inducing gene protein 1 (SYNDIG1) from Bos taurus (Bovine).